Consider the following 309-residue polypeptide: NAD kinase (309 aa).

Asp89 functions as the Proton acceptor in the catalytic mechanism. NAD(+) is bound by residues 89-90 (DG), 163-164 (NE), His174, Arg191, Asp193, and 204-209 (TAYSLS).

It belongs to the NAD kinase family. It depends on a divalent metal cation as a cofactor.

It is found in the cytoplasm. The enzyme catalyses NAD(+) + ATP = ADP + NADP(+) + H(+). In terms of biological role, involved in the regulation of the intracellular balance of NAD and NADP, and is a key enzyme in the biosynthesis of NADP. Catalyzes specifically the phosphorylation on 2'-hydroxyl of the adenosine moiety of NAD to yield NADP. This Shewanella piezotolerans (strain WP3 / JCM 13877) protein is NAD kinase.